The chain runs to 476 residues: Argininosuccinate lyase (476 aa).

It belongs to the lyase 1 family. Argininosuccinate lyase subfamily.

The protein localises to the cytoplasm. The enzyme catalyses 2-(N(omega)-L-arginino)succinate = fumarate + L-arginine. It participates in amino-acid biosynthesis; L-arginine biosynthesis; L-arginine from L-ornithine and carbamoyl phosphate: step 3/3. The protein is Argininosuccinate lyase of Nitrosospira multiformis (strain ATCC 25196 / NCIMB 11849 / C 71).